The primary structure comprises 205 residues: Ribonuclease HII (205 aa).

The RNase H type-2 domain maps to 1-205 (MLVCGVDEAG…RPARLIEAGG (205 aa)). D7, E8, and D105 together coordinate a divalent metal cation.

It belongs to the RNase HII family. Mn(2+) serves as cofactor. Mg(2+) is required as a cofactor.

Its subcellular location is the cytoplasm. The enzyme catalyses Endonucleolytic cleavage to 5'-phosphomonoester.. Functionally, endonuclease that specifically degrades the RNA of RNA-DNA hybrids. The sequence is that of Ribonuclease HII from Cenarchaeum symbiosum (strain A).